The primary structure comprises 222 residues: UPF0585 protein CG18661 (222 aa).

It belongs to the UPF0585 family.

The protein is UPF0585 protein CG18661 of Drosophila melanogaster (Fruit fly).